The following is a 416-amino-acid chain: Serine hydroxymethyltransferase (416 aa).

(6S)-5,6,7,8-tetrahydrofolate-binding positions include L121 and 125–127 (GHL). At K229 the chain carries N6-(pyridoxal phosphate)lysine.

This sequence belongs to the SHMT family. As to quaternary structure, homodimer. Requires pyridoxal 5'-phosphate as cofactor.

It localises to the cytoplasm. The catalysed reaction is (6R)-5,10-methylene-5,6,7,8-tetrahydrofolate + glycine + H2O = (6S)-5,6,7,8-tetrahydrofolate + L-serine. It participates in one-carbon metabolism; tetrahydrofolate interconversion. The protein operates within amino-acid biosynthesis; glycine biosynthesis; glycine from L-serine: step 1/1. In terms of biological role, catalyzes the reversible interconversion of serine and glycine with tetrahydrofolate (THF) serving as the one-carbon carrier. This reaction serves as the major source of one-carbon groups required for the biosynthesis of purines, thymidylate, methionine, and other important biomolecules. Also exhibits THF-independent aldolase activity toward beta-hydroxyamino acids, producing glycine and aldehydes, via a retro-aldol mechanism. The sequence is that of Serine hydroxymethyltransferase from Neisseria meningitidis serogroup B (strain ATCC BAA-335 / MC58).